The sequence spans 354 residues: Pyruvate dehydrogenase E1 component subunit alpha (354 aa).

Residues 1 to 29 form a disordered region; sequence MAKATQDSNRPHKADVGSAIPNHDLPPIP.

As to quaternary structure, heterodimer of an alpha and a beta chain. Requires thiamine diphosphate as cofactor.

It catalyses the reaction N(6)-[(R)-lipoyl]-L-lysyl-[protein] + pyruvate + H(+) = N(6)-[(R)-S(8)-acetyldihydrolipoyl]-L-lysyl-[protein] + CO2. Its function is as follows. The pyruvate dehydrogenase complex catalyzes the overall conversion of pyruvate to acetyl-CoA and CO(2). It contains multiple copies of three enzymatic components: pyruvate dehydrogenase (E1), dihydrolipoamide acetyltransferase (E2) and lipoamide dehydrogenase (E3). The protein is Pyruvate dehydrogenase E1 component subunit alpha (pdhA) of Zymomonas mobilis subsp. mobilis (strain ATCC 31821 / ZM4 / CP4).